Reading from the N-terminus, the 321-residue chain is uncharacterized protein (321 aa).

The disordered stretch occupies residues 1 to 80 (MQGGQEVGRE…GELSGGWGEF (80 aa)).

This is an uncharacterized protein from Mus musculus (Mouse).